We begin with the raw amino-acid sequence, 403 residues long: PP2A regulatory subunit TAP46 (403 aa).

Disordered regions lie at residues 158–184 (ERRG…LDDD) and 351–403 (ANSS…TPCG). Composition is skewed to acidic residues over residues 174–184 (ETEEDDVLDDD) and 366–375 (EDDEEDDDDA). Residues 376-391 (AQDKARAWDDWKDDNP) are compositionally biased toward basic and acidic residues.

This sequence belongs to the IGBP1/TAP42 family.

Functionally, involved in the regulation of the TOR signaling pathway. Seems to act as a regulator of PP2A catalytic activity. In Nicotiana tabacum (Common tobacco), this protein is PP2A regulatory subunit TAP46.